Reading from the N-terminus, the 159-residue chain is ATP synthase subunit b 2 (159 aa).

The helical transmembrane segment at 1–21 (MDATFWAFIALVIFVAIVVYM) threads the bilayer.

The protein belongs to the ATPase B chain family. F-type ATPases have 2 components, F(1) - the catalytic core - and F(0) - the membrane proton channel. F(1) has five subunits: alpha(3), beta(3), gamma(1), delta(1), epsilon(1). F(0) has three main subunits: a(1), b(2) and c(10-14). The alpha and beta chains form an alternating ring which encloses part of the gamma chain. F(1) is attached to F(0) by a central stalk formed by the gamma and epsilon chains, while a peripheral stalk is formed by the delta and b chains.

It localises to the cell inner membrane. In terms of biological role, f(1)F(0) ATP synthase produces ATP from ADP in the presence of a proton or sodium gradient. F-type ATPases consist of two structural domains, F(1) containing the extramembraneous catalytic core and F(0) containing the membrane proton channel, linked together by a central stalk and a peripheral stalk. During catalysis, ATP synthesis in the catalytic domain of F(1) is coupled via a rotary mechanism of the central stalk subunits to proton translocation. Functionally, component of the F(0) channel, it forms part of the peripheral stalk, linking F(1) to F(0). This chain is ATP synthase subunit b 2, found in Brucella ovis (strain ATCC 25840 / 63/290 / NCTC 10512).